Reading from the N-terminus, the 146-residue chain is Hemoglobin subunit beta (146 aa).

Residue alanine 1 is modified to N-acetylalanine. The region spanning 2–146 is the Globin domain; it reads SFDPHEKQLI…VAAALAAEYH (145 aa). The heme b site is built by histidine 63 and histidine 92.

It belongs to the globin family. In terms of assembly, heterotetramer of two alpha chains and two beta chains. Red blood cells.

Functionally, involved in oxygen transport from the lung to the various peripheral tissues. This Crocodylus niloticus (Nile crocodile) protein is Hemoglobin subunit beta (HBB).